Here is an 85-residue protein sequence, read N- to C-terminus: Toxin Cll7 (85 aa).

The N-terminal stretch at 1–19 (MNSLLMITACLVLFGTVWA) is a signal peptide. Residues 20-83 (KEGYLVNTYT…TWPLPNKTCG (64 aa)) form the LCN-type CS-alpha/beta domain. Disulfide bonds link Cys-31/Cys-82, Cys-35/Cys-58, Cys-44/Cys-63, and Cys-48/Cys-65.

The protein belongs to the long (4 C-C) scorpion toxin superfamily. Sodium channel inhibitor family. Beta subfamily. Expressed by the venom gland.

The protein resides in the secreted. Its function is as follows. Beta toxins bind voltage-independently at site-4 of sodium channels (Nav) and shift the voltage of activation toward more negative potentials thereby affecting sodium channel activation and promoting spontaneous and repetitive firing. This chain is Toxin Cll7, found in Centruroides limpidus (Mexican scorpion).